The sequence spans 258 residues: Deoxyribose-phosphate aldolase (258 aa).

Asp102 serves as the catalytic Proton donor/acceptor. The active-site Schiff-base intermediate with acetaldehyde is Lys165. The active-site Proton donor/acceptor is Lys199.

Belongs to the DeoC/FbaB aldolase family. DeoC type 2 subfamily.

It localises to the cytoplasm. It catalyses the reaction 2-deoxy-D-ribose 5-phosphate = D-glyceraldehyde 3-phosphate + acetaldehyde. It participates in carbohydrate degradation; 2-deoxy-D-ribose 1-phosphate degradation; D-glyceraldehyde 3-phosphate and acetaldehyde from 2-deoxy-alpha-D-ribose 1-phosphate: step 2/2. Functionally, catalyzes a reversible aldol reaction between acetaldehyde and D-glyceraldehyde 3-phosphate to generate 2-deoxy-D-ribose 5-phosphate. The polypeptide is Deoxyribose-phosphate aldolase (Vibrio vulnificus (strain CMCP6)).